Reading from the N-terminus, the 326-residue chain is Lipid droplet-associated hydrolase (326 aa).

Residue serine 140 is the Nucleophile of the active site. Residues aspartate 272 and histidine 301 each act as charge relay system in the active site.

Belongs to the AB hydrolase superfamily. LDAH family. As to expression, expressed in liver, adrenal gland, prostate, spleen, kidney, brown and white adipose tissue, testis and to a lesser extent in brain (at protein level). Expressed in peritoneal macrophages and bone marrow-derived macrophages (at protein level). Highly expressed in macrophage and foam cell-rich areas in atherosclerotic lesions (at protein level). mRNA, but no protein, expressed in heart and muscle.

Its subcellular location is the lipid droplet. The protein localises to the endoplasmic reticulum. It carries out the reaction a cholesterol ester + H2O = cholesterol + a fatty acid + H(+). Probable serine lipid hydrolase associated with lipid droplets. Has low cholesterol esterase activity. Appears to lack triglyceride lipase activity. Involved in cholesterol and triglyceride homeostasis; stimulates cellular triglyceride accumulation and cellular cholesterol release. Acts antagonistically with PNPLA2/ATGL in regulation of cellular lipid stores. May regulate triglyceride accumulation indirectly through stimulation of PNPLA2/ATGL ubiquitination and proteasomal degradation. Promotes microtubule-dependent lipid droplet fusion. Highly expressed in macrophage-rich areas in atherosclerotic lesions, suggesting that it could promote cholesterol ester turnover in macrophages. Its function is as follows. Stimulates cellular triglyceride accumulation and lipid droplet fusion. Functionally, associates with lipid droplets but does not stimulate cellular triglyceride accumulation, lipid droplet fusion or ATGL proteasomal degradation. The protein is Lipid droplet-associated hydrolase of Mus musculus (Mouse).